Reading from the N-terminus, the 435-residue chain is Glucoside xylosyltransferase 1 (435 aa).

Over 1–6 (MRRYLR) the chain is Cytoplasmic. The chain crosses the membrane as a helical; Signal-anchor for type II membrane protein span at residues 7–29 (VVGLCLACGFCSLLYAFSQLAVS). The Lumenal portion of the chain corresponds to 30–435 (LEEGAAVGRR…NRYDTPPKER (406 aa)). Residues asparagine 168 and asparagine 232 are each glycosylated (N-linked (GlcNAc...) asparagine).

This sequence belongs to the glycosyltransferase 8 family.

The protein resides in the membrane. The enzyme catalyses 3-O-(beta-D-glucosyl)-L-seryl-[EGF-like domain protein] + UDP-alpha-D-xylose = 3-O-[alpha-D-xylosyl-(1-&gt;3)-beta-D-glucosyl]-L-seryl-[EGF-like domain protein] + UDP + H(+). Glycosyltransferase which elongates the O-linked glucose attached to EGF-like repeats in the extracellular domain of Notch proteins by catalyzing the addition of xylose. The polypeptide is Glucoside xylosyltransferase 1 (Gxylt1) (Rattus norvegicus (Rat)).